A 374-amino-acid chain; its full sequence is Isocitrate dehydrogenase [NAD] catalytic subunit 5, mitochondrial (374 aa).

The N-terminal 44 residues, 1–44 (MTMAANLARRLIGNRSTQILGAVNSSSGAASSVARAFCSSTTPI), are a transit peptide targeting the mitochondrion. Residues Arg-127, Arg-137, Arg-158, and Asp-245 each contribute to the substrate site. Mg(2+) is bound by residues Asp-245, Asp-269, and Asp-273.

It belongs to the isocitrate and isopropylmalate dehydrogenases family. As to quaternary structure, heterooligomer of catalytic and regulatory subunits. Requires Mg(2+) as cofactor. Mn(2+) serves as cofactor. As to expression, ubiquitous.

It is found in the mitochondrion. The catalysed reaction is D-threo-isocitrate + NAD(+) = 2-oxoglutarate + CO2 + NADH. Its function is as follows. Performs an essential role in the oxidative function of the citric acid cycle. The polypeptide is Isocitrate dehydrogenase [NAD] catalytic subunit 5, mitochondrial (IDH5) (Arabidopsis thaliana (Mouse-ear cress)).